The primary structure comprises 237 residues: 7-cyano-7-deazaguanine synthase (237 aa).

14–24 (FSGGQDSATCL) serves as a coordination point for ATP. Cys-202, Cys-217, Cys-220, and Cys-223 together coordinate Zn(2+).

The protein belongs to the QueC family. Zn(2+) is required as a cofactor.

It carries out the reaction 7-carboxy-7-deazaguanine + NH4(+) + ATP = 7-cyano-7-deazaguanine + ADP + phosphate + H2O + H(+). The protein operates within purine metabolism; 7-cyano-7-deazaguanine biosynthesis. In terms of biological role, catalyzes the ATP-dependent conversion of 7-carboxy-7-deazaguanine (CDG) to 7-cyano-7-deazaguanine (preQ(0)). The polypeptide is 7-cyano-7-deazaguanine synthase (Rhodopseudomonas palustris (strain TIE-1)).